The primary structure comprises 375 residues: MSKTLALTEELIALSSVTPEDKGCQSRLIELLSPLGFVCETIESDGVTNLWARKGTAQPLLVFAGHTDVVPTGPLDQWTSPPFVPTQRDGKLYGRGAADMKTSIAAMVVAAEEFVHAHPDHKGSIGFLITSDEEGPATDGTVIVCNALKARGEQLDYCVVGEPTSSDVLGDTIKNGRRGSMSGKLTVKGIQGHIAYPQLARNPIHQCAPALAELVAEKWDDGNEYYLPTSWQVSNMHGGAGASNVIPGNVVIDFNFRFCTASTVEGLQQRVHAILDKHGLEYDLKWSISGYPFLTPKGSLSDAMADAIKSETGVTTELSTTGGTSDGRFIAQICPQVVEFGPPNGSIHKIDEHIEVRFIDPLKNIYRHTMENLLL.

His-66 serves as a coordination point for Zn(2+). Asp-68 is a catalytic residue. Asp-99 is a binding site for Zn(2+). Residue Glu-133 is the Proton acceptor of the active site. Positions 134, 162, and 348 each coordinate Zn(2+).

The protein belongs to the peptidase M20A family. DapE subfamily. Homodimer. Zn(2+) serves as cofactor. The cofactor is Co(2+).

The catalysed reaction is N-succinyl-(2S,6S)-2,6-diaminopimelate + H2O = (2S,6S)-2,6-diaminopimelate + succinate. It participates in amino-acid biosynthesis; L-lysine biosynthesis via DAP pathway; LL-2,6-diaminopimelate from (S)-tetrahydrodipicolinate (succinylase route): step 3/3. In terms of biological role, catalyzes the hydrolysis of N-succinyl-L,L-diaminopimelic acid (SDAP), forming succinate and LL-2,6-diaminopimelate (DAP), an intermediate involved in the bacterial biosynthesis of lysine and meso-diaminopimelic acid, an essential component of bacterial cell walls. This chain is Succinyl-diaminopimelate desuccinylase, found in Herminiimonas arsenicoxydans.